The sequence spans 353 residues: uncharacterized protein (353 aa).

The chain crosses the membrane as a helical span at residues 267–287; that stretch reads GLPLVVIEAMAFGLPIVAFNC.

It belongs to the glycosyltransferase group 1 family. Glycosyltransferase 4 subfamily.

It localises to the membrane. This is an uncharacterized protein from Haemophilus influenzae (strain ATCC 51907 / DSM 11121 / KW20 / Rd).